The following is a 444-amino-acid chain: Tol-Pal system protein TolB (444 aa).

The N-terminal stretch at 1-31 (MSFDLNRRQLMISAATAAGALALGPARDAFG) is a signal peptide.

This sequence belongs to the TolB family. The Tol-Pal system is composed of five core proteins: the inner membrane proteins TolA, TolQ and TolR, the periplasmic protein TolB and the outer membrane protein Pal. They form a network linking the inner and outer membranes and the peptidoglycan layer.

The protein localises to the periplasm. Functionally, part of the Tol-Pal system, which plays a role in outer membrane invagination during cell division and is important for maintaining outer membrane integrity. The polypeptide is Tol-Pal system protein TolB (Rhodopseudomonas palustris (strain ATCC BAA-98 / CGA009)).